We begin with the raw amino-acid sequence, 292 residues long: Claudin-23 (292 aa).

Residues 1-3 are Cytoplasmic-facing; it reads MRT. A helical transmembrane segment spans residues 4 to 24; it reads PVVMTLGMVLAPCGLLLNLTG. At 25 to 81 the chain is on the extracellular side; that stretch reads TLAPGWRLVKGFLNQPVDVELYQGLWDMCREQSSRERECGQTDQWGYFEAQPVLVAR. Residues 82–102 traverse the membrane as a helical segment; it reads ALMVTSLAATVLGLLLASLGV. Over 103–110 the chain is Cytoplasmic; sequence RCWQDEPN. A helical membrane pass occupies residues 111–131; sequence FVLAGLSGVVLFVAGLLGLIP. At 132–160 the chain is on the extracellular side; sequence VSWYNHFLGDRDVLPAPASPVTVQVSYSL. The helical transmembrane segment at 161–181 threads the bilayer; that stretch reads VLGYLGSCLLLLGGFSLALSF. At 182 to 292 the chain is on the cytoplasmic side; sequence APWCDERCRR…DSSLPCDSDL (111 aa). Positions 222–292 are disordered; that stretch reads KYYSDGQHRP…DSSLPCDSDL (71 aa). Over residues 273-282 the composition is skewed to polar residues; that stretch reads DAPSCSTHPC.

It belongs to the claudin family. As to expression, expressed in germinal center B-cells, placenta, stomach as well as in colon tumor.

The protein localises to the cell junction. It localises to the tight junction. It is found in the cell membrane. In terms of biological role, plays a major role in tight junction-specific obliteration of the intercellular space, through calcium-independent cell-adhesion activity. The chain is Claudin-23 (CLDN23) from Homo sapiens (Human).